We begin with the raw amino-acid sequence, 269 residues long: ParA family protein MG470 (269 aa).

This sequence belongs to the ParA family.

The protein is ParA family protein MG470 of Mycoplasma genitalium (strain ATCC 33530 / DSM 19775 / NCTC 10195 / G37) (Mycoplasmoides genitalium).